A 63-amino-acid chain; its full sequence is MARKCAICGKGVQMGMQVSHSHIRTKRTWSPNLQRVRAVVKGAPVRLNVCTRCLRSGKVQRSV.

It belongs to the bacterial ribosomal protein bL28 family.

This chain is Large ribosomal subunit protein bL28, found in Heliobacterium modesticaldum (strain ATCC 51547 / Ice1).